The primary structure comprises 210 residues: Na(+)-translocating NADH-quinone reductase subunit D (210 aa).

A run of 6 helical transmembrane segments spans residues 9–29 (SVLIGPIVSNNPIALQILGVC), 42–62 (LVMTIALTAVCALSNLFISLI), 72–92 (IIVQMTIIASLVIVVDQVLQA), 103–123 (VFVGLIITNCIVMGRAEAFAM), 131–151 (FMDGLGNGLGYGAILLSVGFV), and 178–198 (NGLLLLPPSAFFLIGALIWII).

Belongs to the NqrDE/RnfAE family. Composed of six subunits; NqrA, NqrB, NqrC, NqrD, NqrE and NqrF.

Its subcellular location is the cell inner membrane. It catalyses the reaction a ubiquinone + n Na(+)(in) + NADH + H(+) = a ubiquinol + n Na(+)(out) + NAD(+). NQR complex catalyzes the reduction of ubiquinone-1 to ubiquinol by two successive reactions, coupled with the transport of Na(+) ions from the cytoplasm to the periplasm. NqrA to NqrE are probably involved in the second step, the conversion of ubisemiquinone to ubiquinol. In Shewanella piezotolerans (strain WP3 / JCM 13877), this protein is Na(+)-translocating NADH-quinone reductase subunit D.